A 177-amino-acid chain; its full sequence is Voltage-dependent L-type calcium channel subunit alpha-1C (177 aa).

A helical membrane pass occupies residues 27–45 (ITFFRLFRVMRLVKLLSRG). The helical transmembrane segment at 64 to 84 (YVALLIVMLFFIYAVIGMQVF) threads the bilayer. Asn-90 is a glycosylation site (N-linked (GlcNAc...) asparagine). The pore-forming intramembrane region spans 107-125 (AVLLLFRCATGEAWQEIML). The short motif at 116 to 119 (TGEA) is the Selectivity filter of repeat IV element. The cysteines at positions 133 and 149 are disulfide-linked. N-linked (GlcNAc...) asparagine glycosylation is present at Asn-141. Residues 154-177 (AVFYFISFYMLCAFLIIDLFVAVI) form a helical membrane-spanning segment.

The protein belongs to the calcium channel alpha-1 subunit (TC 1.A.1.11) family. CACNA1C subfamily. Component of a calcium channel complex consisting of a pore-forming alpha subunit (CACNA1C) and ancillary beta, gamma and delta subunits. The channel complex contains alpha, beta, gamma and delta subunits in a 1:1:1:1 ratio, i.e. it contains only one of each type of subunit. CACNA1C channel activity is modulated by ancillary subunits, such as CACNB2, CACNB3, CACNA2D1 and CACNA2D4. Post-translationally, phosphorylation by PKA activates the channel.

It is found in the cell membrane. It localises to the perikaryon. The protein resides in the postsynaptic density membrane. Its subcellular location is the cell projection. The protein localises to the dendrite. It is found in the sarcolemma. It localises to the T-tubule. It catalyses the reaction Ca(2+)(in) = Ca(2+)(out). Inhibited by dihydropyridines (DHP), such as isradipine. Channel activity is regulated by Ca(2+) and calmodulin. Its function is as follows. Pore-forming, alpha-1C subunit of the voltage-gated calcium channel that gives rise to L-type calcium currents. Mediates influx of calcium ions into the cytoplasm, and thereby triggers calcium release from the sarcoplasm. Plays an important role in excitation-contraction coupling in the heart. Required for normal heart development and normal regulation of heart rhythm. Required for normal contraction of smooth muscle cells in blood vessels and in the intestine. Essential for normal blood pressure regulation via its role in the contraction of arterial smooth muscle cells. Long-lasting (L-type) calcium channels belong to the 'high-voltage activated' (HVA) group. This chain is Voltage-dependent L-type calcium channel subunit alpha-1C (CACNA1C), found in Gallus gallus (Chicken).